Consider the following 428-residue polypeptide: Histidinol dehydrogenase (428 aa).

Substrate is bound by residues Ser234, Gln256, and His259. Zn(2+)-binding residues include Gln256 and His259. Catalysis depends on proton acceptor residues Glu324 and His325. Residues His325, Asp358, Glu412, and His417 each coordinate substrate. Position 358 (Asp358) interacts with Zn(2+). Zn(2+) is bound at residue His417.

It belongs to the histidinol dehydrogenase family. It depends on Zn(2+) as a cofactor.

The enzyme catalyses L-histidinol + 2 NAD(+) + H2O = L-histidine + 2 NADH + 3 H(+). It functions in the pathway amino-acid biosynthesis; L-histidine biosynthesis; L-histidine from 5-phospho-alpha-D-ribose 1-diphosphate: step 9/9. Functionally, catalyzes the sequential NAD-dependent oxidations of L-histidinol to L-histidinaldehyde and then to L-histidine. The protein is Histidinol dehydrogenase of Pelagibacter ubique (strain HTCC1062).